Consider the following 1389-residue polypeptide: DNA-directed RNA polymerase subunit beta (1389 aa).

It belongs to the RNA polymerase beta chain family. In plastids the minimal PEP RNA polymerase catalytic core is composed of four subunits: alpha, beta, beta', and beta''. When a (nuclear-encoded) sigma factor is associated with the core the holoenzyme is formed, which can initiate transcription.

It is found in the plastid. The protein resides in the chloroplast. It catalyses the reaction RNA(n) + a ribonucleoside 5'-triphosphate = RNA(n+1) + diphosphate. DNA-dependent RNA polymerase catalyzes the transcription of DNA into RNA using the four ribonucleoside triphosphates as substrates. This Phaeodactylum tricornutum (strain CCAP 1055/1) protein is DNA-directed RNA polymerase subunit beta.